We begin with the raw amino-acid sequence, 473 residues long: MWTVVLGLATLFVAYYIHWINKWRDSKFNGVLPPGTMGLPLIGETIQLSRPSDSLDVHPFIQKKVERYGPIFKTCLAGRPVVVSADAEFNNYIMLQEGRAVEMWYLDTLSKFFGLDTEWLKALGLIHKYIRSITLNHFGAEALRERFLPFIEASSMEALHSWSTQPSVEVKNASALMVFRTSVNKMFGEDAKKLSGNIPGKFTKLLGGFLSLPLNFPGTTYHKCLKDMKEIQKKLREVVDDRLANVGPDVEDFLGQALKDKESEKFISEEFIIQLLFSISFASFESISTTLTLILKLLDEHPEVVKELEAEHEAIRKARADPDGPITWEEYKSMTFTLQVINETLRLGSVTPALLRKTVKDLQVKGYIIPEGWTIMLVTASRHRDPKVYKDPHIFNPWRWKDLDSITIQKNFMPFGGGLRHCAGAEYSKVYLCTFLHILCTKYRWTKLGGGTIARAHILSFEDGLHVKFTPKE.

A helical membrane pass occupies residues 4–24 (VVLGLATLFVAYYIHWINKWR). Cysteine 422 serves as a coordination point for heme.

Belongs to the cytochrome P450 family. Requires heme as cofactor. Highly expressed in young fruits 15 days after anthesis (15-DAA). Also observed in roots.

The protein resides in the membrane. It carries out the reaction cucurbitadienol + 2 reduced [NADPH--hemoprotein reductase] + 2 O2 = 11-oxocucurbitadienol + 2 oxidized [NADPH--hemoprotein reductase] + 3 H2O + 2 H(+). The enzyme catalyses cucurbitadienol + reduced [NADPH--hemoprotein reductase] + O2 = 11-hydroxycucurbitadienol + oxidized [NADPH--hemoprotein reductase] + H2O + H(+). It catalyses the reaction 11-hydroxycucurbitadienol + reduced [NADPH--hemoprotein reductase] + O2 = 11-oxocucurbitadienol + oxidized [NADPH--hemoprotein reductase] + 2 H2O + H(+). The catalysed reaction is (24R)-24,25-dihydroxycucurbitadienol + reduced [NADPH--hemoprotein reductase] + O2 = mogrol + oxidized [NADPH--hemoprotein reductase] + H2O + H(+). The protein operates within secondary metabolite biosynthesis; terpenoid biosynthesis. Its function is as follows. Hydroxylase involved in the biosynthesis of cucurbitacin and mogroside tetracyclic triterpene natural products (e.g. siamenoside I and mogrosides IV, V and VI). Cucurbitacins have cytotoxic properties and exhibit deterrent taste as a defense barrier against herbivores. Mogrosides are nonsugar highly oxygenated compounds used as high-intensity zero-calorie sweeteners; they also possess pharmacological properties such as regulating immunity, lowering blood sugar and lipid levels, protecting the liver, and acting as antioxidants and antitumor agents. Catalyzes the oxidation of cucurbitadienol at the C-11 position to produce 11-oxocucurbitadienol, a possible biosynthetic intermediate from cucurbitadienol to mogrol. Also mediates the conversion of 24,25-dihydroxycucurbitadienol to mogrol. The sequence is that of Cucurbitadienol 11-hydroxylase from Siraitia grosvenorii (Monk's fruit).